Reading from the N-terminus, the 768-residue chain is Cullin-3 (768 aa).

At Ser-2 the chain carries N-acetylserine. Positions Ser-2–Ile-41 are interaction with KLHL18. Ser-585 bears the Phosphoserine mark. Residues Val-677–Asp-698 form a disordered region. Residues Gly-682–Asp-698 show a composition bias toward basic and acidic residues. The Cullin neddylation domain maps to Asp-698–Asp-760. Lys-712 participates in a covalent cross-link: Glycyl lysine isopeptide (Lys-Gly) (interchain with G-Cter in NEDD8).

The protein belongs to the cullin family. In terms of assembly, forms neddylation-dependent homodimers. Component of multiple BCR (BTB-CUL3-RBX1) E3 ubiquitin-protein ligase complexes formed of CUL3, RBX1 and a variable BTB domain-containing protein acting as both, adapter to cullin and substrate recognition subunit. The BCR complex may be active as a heterodimeric complex, in which NEDD8, covalently attached to one CUL3 molecule, binds to the C-terminus of a second CUL3 molecule. Interacts with RBX1, RNF7, CYCE and TIP120A/CAND1. Part of the BCR(SPOP) containing SPOP, and of BCR containing homodimeric SPOPL or the heterodimer formed by SPOP and SPOPL. Part of the probable BCR(KLHL9-KLHL13) complex with BTB domain proteins KLHL9 and KLHL13. Part of the BCR(KLHL41) complex containing KLHL41. Component of the BCR(KLHL12) E3 ubiquitin ligase complex, at least composed of CUL3 and KLHL12 and RBX1. Component of the BCR(KLHL3) E3 ubiquitin ligase complex, at least composed of CUL3 and KLHL3 and RBX1. Part of the BCR(ENC1) complex containing ENC1. Part of a complex consisting of BMI1/PCGF4, CUL3 and SPOP. Part of a complex consisting of BRMS1, CUL3 and SPOP. Component of the BCR(KLHL21) E3 ubiquitin ligase complex, at least composed of CUL3, KLHL21 and RBX1. Component of the BCR(KLHL22) E3 ubiquitin ligase complex, at least composed of CUL3, KLHL22 and RBX1. Component of the BCR(KLHL25) E3 ubiquitin ligase complex, at least composed of CUL3, KLHL25 and RBX1. Part of a complex consisting of MACROH2A1, CUL3 and SPOP. Component of the BCR(KLHL42) E3 ubiquitin ligase complex, at least composed of CUL3 and KLHL42. Interacts with KLHL42 (via the BTB domain). Interacts with KATNA1; the interaction is enhanced by KLHL42. Component of the BCR(KBTBD8) E3 ubiquitin ligase complex, at least composed of CUL3, KBTBD8 and RBX1. Interacts with KCTD5, KLHL9, KLHL11, KLHL13, GAN, ZBTB16, KLHL3, KLHL15, KLHL20, KLHL36, GMCL2, BTBD1. Part of a complex that contains CUL3, RBX1 and GAN. Interacts (via BTB domain) with KLHL17; the interaction regulates surface GRIK2 expression. Interacts with KCTD7. Part of the BCR(GAN) complex containing GAN. Part of the BCR(KEAP1) complex containing KEAP1. Interacts with KLHL10. Interacts with KAT5 and ATF2. Interacts with KCTD17 in the BCR(KCTD17) E3 ubiquitin ligase complex, at least composed of CUL3, KCTD17 and RBX1. Interacts (when neddylated) with ARIH1; leading to activate the E3 ligase activity of ARIH1. Interacts with COPS9 isoform 2. Interacts with PPP2R5B; this interaction is indirect and mediated through KLHL15-binding and leads to PPP2R5B proteasomal degradation. Interacts with RBBP8/CtIP; this interaction is indirect and mediated through KLHL15-binding and leads to RBBP8 proteasomal degradation. Interacts with KLHL24 in the BCR(KLHL24) E3 ubiquitin ligase complex, composed of CUL3, RBX1 and KLHL24. Interacts with RHOBTB2. Interacts with AURKA and KLHL18 (via BTB domain). Interacts (unneddylated form) with DCUN1D1, DCUN1D2, DCUN1D3, DCUN1D4 and DCUN1D5; these interactions promote the cullin neddylation. Component of a BCR3 (BTB-CUL3-RBX1) E3 ubiquitin ligase complex, also named Cul3-RING ubiquitin ligase complex CUL3(KBTBD6/7), composed of CUL3, RBX1, KBTBD6 and KBTBD7. Component of the BCR(KBTBD2) E3 ubiquitin ligase complex, at least composed of CUL3, KBTBD2 and RBX1. Interacts with KBTBD2 (via the BTB domain). Component of the BCR(KBTBD4) E3 ubiquitin ligase complex, at least composed of CUL3, KBTBD4 and RBX1. Component of the BCR(ARMC5) E3 ubiquitin ligase complex, composed of CUL3, ARMC5 and RBX1. Neddylated. Attachment of NEDD8 is required for the E3 ubiquitin-protein ligase activity of the BCR complex. Deneddylated via its interaction with the COP9 signalosome (CSN) complex. As to expression, brain, spermatozoa, and testis (at protein level). Widely expressed.

Its subcellular location is the nucleus. It is found in the golgi apparatus. The protein localises to the cell projection. It localises to the cilium. The protein resides in the flagellum. Its subcellular location is the cytoplasm. It is found in the cytoskeleton. The protein localises to the spindle. It localises to the microtubule organizing center. The protein resides in the centrosome. Its subcellular location is the spindle pole. Its pathway is protein modification; protein ubiquitination. In terms of biological role, core component of multiple cullin-RING-based BCR (BTB-CUL3-RBX1) E3 ubiquitin-protein ligase complexes which mediate the ubiquitination and subsequent proteasomal degradation of target proteins. BCR complexes and ARIH1 collaborate in tandem to mediate ubiquitination of target proteins. As a scaffold protein may contribute to catalysis through positioning of the substrate and the ubiquitin-conjugating enzyme. The E3 ubiquitin-protein ligase activity of the complex is dependent on the neddylation of the cullin subunit and is inhibited by the association of the deneddylated cullin subunit with TIP120A/CAND1. The functional specificity of the BCR complex depends on the BTB domain-containing protein as the substrate recognition component. BCR(KLHL42) is involved in ubiquitination of KATNA1. BCR(SPOP) is involved in ubiquitination of BMI1/PCGF4, BRMS1, MACROH2A1 and DAXX, GLI2 and GLI3. Can also form a cullin-RING-based BCR (BTB-CUL3-RBX1) E3 ubiquitin-protein ligase complex containing homodimeric SPOPL or the heterodimer formed by SPOP and SPOPL; these complexes have lower ubiquitin ligase activity. BCR(KLHL9-KLHL13) controls the dynamic behavior of AURKB on mitotic chromosomes and thereby coordinates faithful mitotic progression and completion of cytokinesis. BCR(KLHL12) is involved in ER-Golgi transport by regulating the size of COPII coats, thereby playing a key role in collagen export, which is required for embryonic stem (ES) cells division: BCR(KLHL12) acts by mediating monoubiquitination of SEC31 (SEC31A or SEC31B). BCR(KLHL3) acts as a regulator of ion transport in the distal nephron; by mediating ubiquitination of WNK4. The BCR(KLHL20) E3 ubiquitin ligase complex is involved in interferon response and anterograde Golgi to endosome transport: it mediates both ubiquitination leading to degradation and 'Lys-33'-linked ubiquitination. The BCR(KLHL21) E3 ubiquitin ligase complex regulates localization of the chromosomal passenger complex (CPC) from chromosomes to the spindle midzone in anaphase and mediates the ubiquitination of AURKB. The BCR(KLHL22) ubiquitin ligase complex mediates monoubiquitination of PLK1, leading to PLK1 dissociation from phosphoreceptor proteins and subsequent removal from kinetochores, allowing silencing of the spindle assembly checkpoint (SAC) and chromosome segregation. The BCR(KLHL22) ubiquitin ligase complex is also responsible for the amino acid-stimulated 'Lys-48' polyubiquitination and proteasomal degradation of DEPDC5. Through the degradation of DEPDC5, releases the GATOR1 complex-mediated inhibition of the TORC1 pathway. The BCR(KLHL25) ubiquitin ligase complex is involved in translational homeostasis by mediating ubiquitination and subsequent degradation of hypophosphorylated EIF4EBP1 (4E-BP1). The BCR(KLHL25) ubiquitin ligase complex is also involved in lipid synthesis by mediating ubiquitination and degradation of ACLY. The BCR(KBTBD8) complex acts by mediating monoubiquitination of NOLC1 and TCOF1, leading to remodel the translational program of differentiating cells in favor of neural crest specification. Involved in ubiquitination of cyclin E and of cyclin D1 (in vitro) thus involved in regulation of G1/S transition. Involved in the ubiquitination of KEAP1, ENC1 and KLHL41. In concert with ATF2 and RBX1, promotes degradation of KAT5 thereby attenuating its ability to acetylate and activate ATM. The BCR(KCTD17) E3 ubiquitin ligase complex mediates ubiquitination and degradation of TCHP, a down-regulator of cilium assembly, thereby inducing ciliogenesis. The BCR(KLHL24) E3 ubiquitin ligase complex mediates ubiquitination of KRT14, controls KRT14 levels during keratinocytes differentiation, and is essential for skin integrity. The BCR(KLHL18) E3 ubiquitin ligase complex mediates the ubiquitination of AURKA leading to its activation at the centrosome which is required for initiating mitotic entry. The BCR(KEAP1) E3 ubiquitin ligase complex acts as a key sensor of oxidative and electrophilic stress by mediating ubiquitination and degradation of NFE2L2/NRF2, a transcription factor regulating expression of many cytoprotective genes. As part of the CUL3(KBTBD6/7) E3 ubiquitin ligase complex functions mediates 'Lys-48' ubiquitination and proteasomal degradation of TIAM1. By controlling the ubiquitination of that RAC1 guanine exchange factors (GEF), regulates RAC1 signal transduction and downstream biological processes including the organization of the cytoskeleton, cell migration and cell proliferation. The BCR(KBTBD4) E3 ubiquitin ligase complex targets CoREST corepressor complex components RCOR1, KDM1A/LSD1 and HDAC2 for proteasomal degradation with RCOR1 likely to be the primary target while degradation of KDM1A and HDAC2 is likely due to their association with RCOR1. It also targets RCOR3, MIER2 and MIER3 for proteasomal degradation as well as associated proteins ZNF217 and RREB1 with degradation being dependent on the presence of an ELM2 domain in the target proteins. The BCR(ARMC5) complex mediates premature transcription termination of transcripts that are unfavorably configured for transcriptional elongation by mediating ubiquitination of Pol II subunit POLR2A. Required for 'Lys-63'-linked ubiquitination of large ribosomal subunit protein MRPL12. The chain is Cullin-3 from Homo sapiens (Human).